Consider the following 430-residue polypeptide: Serine--tRNA ligase (430 aa).

L-serine is bound at residue 231 to 233; that stretch reads TSE. 262–264 contacts ATP; that stretch reads RSE. Glu285 contributes to the L-serine binding site. 349–352 contacts ATP; that stretch reads EISS. Residue Ser385 participates in L-serine binding.

The protein belongs to the class-II aminoacyl-tRNA synthetase family. Type-1 seryl-tRNA synthetase subfamily. As to quaternary structure, homodimer. The tRNA molecule binds across the dimer.

Its subcellular location is the cytoplasm. It catalyses the reaction tRNA(Ser) + L-serine + ATP = L-seryl-tRNA(Ser) + AMP + diphosphate + H(+). The catalysed reaction is tRNA(Sec) + L-serine + ATP = L-seryl-tRNA(Sec) + AMP + diphosphate + H(+). The protein operates within aminoacyl-tRNA biosynthesis; selenocysteinyl-tRNA(Sec) biosynthesis; L-seryl-tRNA(Sec) from L-serine and tRNA(Sec): step 1/1. Catalyzes the attachment of serine to tRNA(Ser). Is also able to aminoacylate tRNA(Sec) with serine, to form the misacylated tRNA L-seryl-tRNA(Sec), which will be further converted into selenocysteinyl-tRNA(Sec). This chain is Serine--tRNA ligase, found in Jannaschia sp. (strain CCS1).